A 155-amino-acid polypeptide reads, in one-letter code: RNA pyrophosphohydrolase (155 aa).

The Nudix hydrolase domain occupies 5 to 147; that stretch reads KYRPNVAAII…KRQVYRQVIA (143 aa). The short motif at 42–63 is the Nudix box element; it reads GGIDEGETPLEALHRELLEEIG.

The protein belongs to the Nudix hydrolase family. RppH subfamily. It depends on a divalent metal cation as a cofactor.

Functionally, accelerates the degradation of transcripts by removing pyrophosphate from the 5'-end of triphosphorylated RNA, leading to a more labile monophosphorylated state that can stimulate subsequent ribonuclease cleavage. This is RNA pyrophosphohydrolase from Helicobacter pylori (strain HPAG1).